The sequence spans 258 residues: Acetylglutamate kinase (258 aa).

Substrate-binding positions include Gly-44–Gly-45, Arg-66, and Asn-158. Residues Asp-181–Leu-186 and Ile-209–Thr-211 contribute to the ATP site.

It belongs to the acetylglutamate kinase family. ArgB subfamily. Homodimer.

It localises to the cytoplasm. The enzyme catalyses N-acetyl-L-glutamate + ATP = N-acetyl-L-glutamyl 5-phosphate + ADP. The protein operates within amino-acid biosynthesis; L-arginine biosynthesis; N(2)-acetyl-L-ornithine from L-glutamate: step 2/4. Its function is as follows. Catalyzes the ATP-dependent phosphorylation of N-acetyl-L-glutamate. The protein is Acetylglutamate kinase of Escherichia coli O6:K15:H31 (strain 536 / UPEC).